The chain runs to 187 residues: Large ribosomal subunit protein uL5 (187 aa).

The protein belongs to the universal ribosomal protein uL5 family. As to quaternary structure, part of the 50S ribosomal subunit; part of the 5S rRNA/L5/L18/L25 subcomplex. Contacts the 5S rRNA and the P site tRNA. Forms a bridge to the 30S subunit in the 70S ribosome.

Its function is as follows. This is one of the proteins that bind and probably mediate the attachment of the 5S RNA into the large ribosomal subunit, where it forms part of the central protuberance. In the 70S ribosome it contacts protein S13 of the 30S subunit (bridge B1b), connecting the 2 subunits; this bridge is implicated in subunit movement. Contacts the P site tRNA; the 5S rRNA and some of its associated proteins might help stabilize positioning of ribosome-bound tRNAs. The chain is Large ribosomal subunit protein uL5 from Mycolicibacterium paratuberculosis (strain ATCC BAA-968 / K-10) (Mycobacterium paratuberculosis).